The following is a 445-amino-acid chain: 2-oxoisovalerate dehydrogenase subunit alpha, mitochondrial (445 aa).

Residues 1 to 45 (MAVAIAAARVWRLNRGLSQAALLLLRQPGARGLARSHPPRQQQQF) constitute a mitochondrion transit peptide. Positions 33–52 (LARSHPPRQQQQFSSLDDKP) are disordered. Thiamine diphosphate is bound by residues Y158 and R159. Residue S206 coordinates K(+). S207 contributes to the thiamine diphosphate binding site. Residues P208, T211, and Q212 each contribute to the K(+) site. E238 contributes to the Mg(2+) binding site. Positions 239, 240, and 265 each coordinate thiamine diphosphate. 2 residues coordinate Mg(2+): N267 and Y269. H336 lines the thiamine diphosphate pocket. Position 337 is a phosphoserine; by BCKDK (S337). T338 carries the phosphothreonine modification. Phosphoserine is present on residues S339 and S347. Position 356 is an N6-acetyllysine; alternate (K356). K356 bears the N6-succinyllysine; alternate mark. The residue at position 380 (K380) is an N6-succinyllysine.

Belongs to the BCKDHA family. Heterotetramer of 2 alpha/BCKDHA and 2 beta chains/BCKDHB that forms the branched-chain alpha-keto acid decarboxylase (E1) component of the BCKD complex. The branched-chain alpha-ketoacid dehydrogenase is a large complex composed of three major building blocks E1, E2 and E3. It is organized around E2, a 24-meric cubic core composed of DBT, to which are associated 6 to 12 copies of E1, and approximately 6 copies of the dehydrogenase E3, a DLD dimer. Interacts with PPM1K. It depends on thiamine diphosphate as a cofactor. Mg(2+) serves as cofactor. Phosphorylated at Ser-337 by BCKDK and dephosphorylated by protein phosphatase PPM1K.

It localises to the mitochondrion matrix. The catalysed reaction is N(6)-[(R)-lipoyl]-L-lysyl-[protein] + 3-methyl-2-oxobutanoate + H(+) = N(6)-[(R)-S(8)-2-methylpropanoyldihydrolipoyl]-L-lysyl-[protein] + CO2. Functionally, together with BCKDHB forms the heterotetrameric E1 subunit of the mitochondrial branched-chain alpha-ketoacid dehydrogenase (BCKD) complex. The BCKD complex catalyzes the multi-step oxidative decarboxylation of alpha-ketoacids derived from the branched-chain amino-acids valine, leucine and isoleucine producing CO2 and acyl-CoA which is subsequently utilized to produce energy. The E1 subunit catalyzes the first step with the decarboxylation of the alpha-ketoacid forming an enzyme-product intermediate. A reductive acylation mediated by the lipoylamide cofactor of E2 extracts the acyl group from the E1 active site for the next step of the reaction. In Homo sapiens (Human), this protein is 2-oxoisovalerate dehydrogenase subunit alpha, mitochondrial.